Reading from the N-terminus, the 342-residue chain is N-acetyl-gamma-glutamyl-phosphate reductase (342 aa).

Residue cysteine 146 is part of the active site.

The protein belongs to the NAGSA dehydrogenase family. Type 1 subfamily.

Its subcellular location is the cytoplasm. The catalysed reaction is N-acetyl-L-glutamate 5-semialdehyde + phosphate + NADP(+) = N-acetyl-L-glutamyl 5-phosphate + NADPH + H(+). It functions in the pathway amino-acid biosynthesis; L-arginine biosynthesis; N(2)-acetyl-L-ornithine from L-glutamate: step 3/4. Catalyzes the NADPH-dependent reduction of N-acetyl-5-glutamyl phosphate to yield N-acetyl-L-glutamate 5-semialdehyde. This Saccharopolyspora erythraea (strain ATCC 11635 / DSM 40517 / JCM 4748 / NBRC 13426 / NCIMB 8594 / NRRL 2338) protein is N-acetyl-gamma-glutamyl-phosphate reductase.